The primary structure comprises 489 residues: Glucose-6-phosphate 1-dehydrogenase (489 aa).

Residues 15–22 (GATGDLAK), Arg49, 86–87 (DV), and Lys149 each bind NADP(+). Substrate contacts are provided by His179, Lys183, Glu217, and Asp236. His241 (proton acceptor) is an active-site residue. Positions 341 and 346 each coordinate substrate.

This sequence belongs to the glucose-6-phosphate dehydrogenase family.

The catalysed reaction is D-glucose 6-phosphate + NADP(+) = 6-phospho-D-glucono-1,5-lactone + NADPH + H(+). The protein operates within carbohydrate degradation; pentose phosphate pathway; D-ribulose 5-phosphate from D-glucose 6-phosphate (oxidative stage): step 1/3. In terms of biological role, catalyzes the oxidation of glucose 6-phosphate to 6-phosphogluconolactone. The sequence is that of Glucose-6-phosphate 1-dehydrogenase from Bacillus subtilis (strain 168).